A 423-amino-acid polypeptide reads, in one-letter code: Sulfate adenylyltransferase (423 aa).

Belongs to the sulfate adenylyltransferase family.

It carries out the reaction sulfate + ATP + H(+) = adenosine 5'-phosphosulfate + diphosphate. Its pathway is sulfur metabolism; hydrogen sulfide biosynthesis; sulfite from sulfate: step 1/3. This is Sulfate adenylyltransferase from Desulfovibrio desulfuricans (strain ATCC 27774 / DSM 6949 / MB).